Here is a 101-residue protein sequence, read N- to C-terminus: Protein RnfH (101 aa).

Belongs to the UPF0125 (RnfH) family.

This chain is Protein RnfH, found in Coxiella burnetii (strain CbuK_Q154) (Coxiella burnetii (strain Q154)).